Here is a 216-residue protein sequence, read N- to C-terminus: 3-isopropylmalate dehydratase small subunit (216 aa).

Belongs to the LeuD family. LeuD type 1 subfamily. Heterodimer of LeuC and LeuD.

It catalyses the reaction (2R,3S)-3-isopropylmalate = (2S)-2-isopropylmalate. It participates in amino-acid biosynthesis; L-leucine biosynthesis; L-leucine from 3-methyl-2-oxobutanoate: step 2/4. Functionally, catalyzes the isomerization between 2-isopropylmalate and 3-isopropylmalate, via the formation of 2-isopropylmaleate. The chain is 3-isopropylmalate dehydratase small subunit from Marinomonas sp. (strain MWYL1).